A 182-amino-acid chain; its full sequence is Pentatricopeptide repeat-containing protein At2g01360 (182 aa).

PPR repeat units lie at residues E30–L64, G65–D95, and G98–P132.

Belongs to the PPR family. P subfamily.

This is Pentatricopeptide repeat-containing protein At2g01360 from Arabidopsis thaliana (Mouse-ear cress).